A 134-amino-acid polypeptide reads, in one-letter code: C-C motif chemokine 21 (134 aa).

A signal peptide spans 1-23 (MAQSLALSLLILVLAFGIPRTQG). Disulfide bonds link Cys-31-Cys-57, Cys-32-Cys-75, and Cys-103-Cys-122. Residues 88–134 (QHLDKTPSPQKPAQGCRKDRGASKTGKKGKGSKGCKRTERSQTPKGP) form a disordered region. The tract at residues 98–134 (KPAQGCRKDRGASKTGKKGKGSKGCKRTERSQTPKGP) is C-terminal basic extension. The span at 112-122 (TGKKGKGSKGC) shows a compositional bias: basic residues. Residues 123-134 (KRTERSQTPKGP) are compositionally biased toward basic and acidic residues.

Belongs to the intercrine beta (chemokine CC) family. In terms of assembly, monomer. Binds to CCR7. Interacts with PDPN; relocalizes PDPN to the basolateral membrane. Interacts with TNFAIP6 (via Link domain). Interacts with GPR174. In terms of tissue distribution, highly expressed in high endothelial venules of lymph nodes, spleen and appendix. Intermediate levels found in small intestine, thyroid gland and trachea. Low level expression in thymus, bone marrow, liver, and pancreas. Also found in tonsil, fetal heart and fetal spleen.

The protein resides in the secreted. In terms of biological role, inhibits hemopoiesis and stimulates chemotaxis. Chemotactic in vitro for thymocytes and activated T-cells, but not for B-cells, macrophages, or neutrophils. Shows preferential activity towards naive T-cells. May play a role in mediating homing of lymphocytes to secondary lymphoid organs. Binds to atypical chemokine receptor ACKR4 and mediates the recruitment of beta-arrestin (ARRB1/2) to ACKR4. In Homo sapiens (Human), this protein is C-C motif chemokine 21 (CCL21).